The following is a 263-amino-acid chain: Phosphoinositide-3-kinase-interacting protein 1 (263 aa).

Residues 1–18 form the signal peptide; the sequence is MFGRLYFMLLLSVGLVDC. Topologically, residues 19-163 are extracellular; that stretch reads LSVVKDCITN…SGPKKKKDLG (145 aa). In terms of domain architecture, Kringle spans 24-99; it reads DCITNNGEDY…KKEACDIRIC (76 aa). Intrachain disulfides connect C25–C99, C46–C80, and C69–C94. An N-linked (GlcNAc...) asparagine glycan is attached at N103. A helical transmembrane segment spans residues 164 to 184; the sequence is TLGYVLAVFMMAIIILLGGGI. The Cytoplasmic portion of the chain corresponds to 185–263; sequence TMGYFYKRGR…LMGSAGTPGA (79 aa). Residues 239–263 form a disordered region; it reads NNQTPTQEPVEGADPLMGSAGTPGA.

It is found in the cell membrane. Negative regulator of hepatic phosphatidylinositol 3-kinase (PI3K) activity. The polypeptide is Phosphoinositide-3-kinase-interacting protein 1 (pik3ip1) (Danio rerio (Zebrafish)).